We begin with the raw amino-acid sequence, 358 residues long: Photosystem II protein D1 (358 aa).

Helical transmembrane passes span 28 to 45 (YVGW…AAAI), 117 to 132 (HFLI…QWEL), and 141 to 155 (WICV…AAFA). His117 lines the chlorophyll a pocket. Residue Trp125 coordinates pheophytin a. Positions 169 and 188 each coordinate [CaMn4O5] cluster. Residues 196 to 217 (FHMIGVAGMFGGSLFSAMHGSL) traverse the membrane as a helical segment. His197 is a binding site for chlorophyll a. Residues His214 and 263 to 264 (SF) each bind a quinone. His214 is a Fe cation binding site. His271 provides a ligand contact to Fe cation. A helical membrane pass occupies residues 273–287 (FLAAWPVICIWITSL). 4 residues coordinate [CaMn4O5] cluster: His331, Glu332, Asp341, and Ala343. Positions 344–358 (AAESTPVALIAPAIG) are excised as a propeptide.

The protein belongs to the reaction center PufL/M/PsbA/D family. As to quaternary structure, PSII is composed of 1 copy each of membrane proteins PsbA, PsbB, PsbC, PsbD, PsbE, PsbF, PsbH, PsbI, PsbJ, PsbK, PsbL, PsbM, PsbT, PsbX, PsbY, Psb30/Ycf12, peripheral proteins PsbO, CyanoQ (PsbQ), PsbU, PsbV and a large number of cofactors. It forms dimeric complexes. Requires The D1/D2 heterodimer binds P680, chlorophylls that are the primary electron donor of PSII, and subsequent electron acceptors. It shares a non-heme iron and each subunit binds pheophytin, quinone, additional chlorophylls, carotenoids and lipids. D1 provides most of the ligands for the Mn4-Ca-O5 cluster of the oxygen-evolving complex (OEC). There is also a Cl(-1) ion associated with D1 and D2, which is required for oxygen evolution. The PSII complex binds additional chlorophylls, carotenoids and specific lipids. as cofactor. Tyr-160 forms a radical intermediate that is referred to as redox-active TyrZ, YZ or Y-Z. In terms of processing, C-terminally processed by CtpA; processing is essential to allow assembly of the oxygen-evolving complex and thus photosynthetic growth.

The protein localises to the cellular thylakoid membrane. It catalyses the reaction 2 a plastoquinone + 4 hnu + 2 H2O = 2 a plastoquinol + O2. In terms of biological role, photosystem II (PSII) is a light-driven water:plastoquinone oxidoreductase that uses light energy to abstract electrons from H(2)O, generating O(2) and a proton gradient subsequently used for ATP formation. It consists of a core antenna complex that captures photons, and an electron transfer chain that converts photonic excitation into a charge separation. The D1/D2 (PsbA/PsbD) reaction center heterodimer binds P680, the primary electron donor of PSII as well as several subsequent electron acceptors. This is Photosystem II protein D1 from Prochlorococcus marinus (strain MIT 9303).